The primary structure comprises 215 residues: Protein C' (215 aa).

The tract at residues 12–34 (MPSFLKKILKLRGRRQEDESRSR) is disordered. The involved in self-degradation and in host STAT1 degradation stretch occupies residues 15–22 (FLKKILKL). Residues 25 to 35 (RRQEDESRSRM) show a composition bias toward basic and acidic residues. A compositionally biased stretch (polar residues) spans 36–66 (LSDSSTQSYQVNQLTSEETEAGSTIPSTPSK).

The protein belongs to the respirovirus protein C family. In terms of assembly, the different isoforms interact (via C-terminus) with unphosphorylated and phosphorylated human STAT1 (via N-terminus), favoring the formation of parallel STAT1 homodimers. The different isoforms do not interact with host STAT2. C protein interacts with L protein; this interaction has an inhibitory effect on viral transcription and replication. Post-translationally, protein Y1 is produced not only by alternative initiation, but also by proteolytic cleavage of C'. Only alternative initiation is detected in vitro, whereas in vivo cleavage seems to be predominant.

The protein resides in the host cytoplasm. Functionally, the different products prevent the establishment of cellular antiviral state by blocking the interferon-alpha/beta (IFN-alpha/beta) and IFN-gamma signaling pathways. They inhibit IFN-alpha/beta induced tyrosine phosphorylation of STAT1 and STAT2. Blocking the IFN-alpha/beta pathway requires binding to STAT1 in the cytoplasm. They inhibit IFN-gamma induced serine phosphorylation of STAT1. Block the IFN-gamma pathway by binding to and stabilizing the parallel form of the STAT1 dimer, further inducing high-molecular-weight complex formation and inhibition of transcription by IFN-gamma. May also have a role in preventing the cell to enter apoptosis. Modulate regulation of viral transcription and replication. Overexpression inhibits the viral RNA polymerase. The absence of all C', C and Y1 proteins leads to viral delayed growth. Plays an important role in virion particles release. Modulates virion shape. This chain is Protein C' (P/V/C), found in Cavia cutleri (Guinea pig).